A 98-amino-acid polypeptide reads, in one-letter code: Large ribosomal subunit protein bL27 (98 aa).

Residues 1 to 22 are disordered; the sequence is MAHKKGTGSTRNGRDSNAQRLG. The span at 7–19 shows a compositional bias: polar residues; it reads TGSTRNGRDSNAQ.

This sequence belongs to the bacterial ribosomal protein bL27 family.

This chain is Large ribosomal subunit protein bL27, found in Nostoc punctiforme (strain ATCC 29133 / PCC 73102).